Consider the following 1958-residue polypeptide: Rho GTPase-activating protein 21 (1958 aa).

Residues 1–42 form a disordered region; the sequence is MMATRRTGLSEGDGDKLKACEVSKNKDGKEQSETVSLSEDET. Residues 13–32 are compositionally biased toward basic and acidic residues; it reads DGDKLKACEVSKNKDGKEQS. Residues S36 and S57 each carry the phosphoserine modification. Positions 50–159 constitute a PDZ domain; sequence TVTLKRTSQG…TLELSVMPKD (110 aa). 3 stretches are compositionally biased toward polar residues: residues 286-295, 306-325, and 418-436; these read SNRNNHTGPS, SEQT…LSIP, and ASQS…TTLQ. 2 disordered regions span residues 286–325 and 418–458; these read SNRN…LSIP and ASQS…QRSV. The span at 448 to 458 shows a compositional bias: low complexity; it reads PQSVQIRQRSV. The residue at position 459 (S459) is a Phosphoserine. An omega-N-methylarginine mark is found at R554 and R575. Phosphoserine occurs at positions 612, 616, and 625. Residues 659–687 show a composition bias toward polar residues; that stretch reads SLLNQQTWVRTDSAPDQQVETGKSPSLSG. The segment at 659-751 is disordered; sequence SLLNQQTWVR…PSGRQTPQPL (93 aa). S717 carries the phosphoserine modification. Over residues 729–742 the composition is skewed to basic and acidic residues; sequence LDNKEAVILREKPP. Phosphothreonine is present on T747. Phosphoserine is present on residues S857, S862, and S881. The disordered stretch occupies residues 859-885; the sequence is DHESVGPPSLDAQPNSKTERSKSYDEG. Residues 875-885 show a composition bias toward basic and acidic residues; sequence KTERSKSYDEG. Y882 carries the post-translational modification Phosphotyrosine. 5 positions are modified to phosphoserine: S924, S926, S954, S1099, and S1115. The tract at residues 930 to 1097 is interaction with ARF1 and ARF6; it reads SDAAKEGWLH…AKSEPKTQSP (168 aa). The PH domain maps to 931 to 1040; the sequence is DAAKEGWLHF…WIKTIQESSN (110 aa). Residues 1086–1133 form a disordered region; that stretch reads LGAKSEPKTQSPHSPKEESERKLLSKDDTSPPKDKGTWRKGIPSIMRK. A compositionally biased stretch (basic and acidic residues) spans 1099–1122; the sequence is SPKEESERKLLSKDDTSPPKDKGT. The Rho-GAP domain maps to 1147–1339; it reads VRLDDCPPAH…TLIQHHDWFF (193 aa). 4 disordered regions span residues 1348–1401, 1418–1575, 1598–1642, and 1655–1686; these read LTTV…GSGK, SRKR…KHSE, SLDS…SEFP, and RGKL…SSLD. Residues 1349-1362 are compositionally biased toward polar residues; that stretch reads TTVQEESTVDSQPV. A compositionally biased stretch (low complexity) spans 1383–1401; sequence SDSATSDSTKSKGSWGSGK. A phosphoserine mark is found at S1418, S1432, and S1433. 2 stretches are compositionally biased toward basic and acidic residues: residues 1441–1466 and 1477–1493; these read FFKK…ETLG and NSTR…KISL. K1444 participates in a covalent cross-link: Glycyl lysine isopeptide (Lys-Gly) (interchain with G-Cter in SUMO). At S1504 the chain carries Phosphoserine. T1516 is modified (phosphothreonine). A Phosphoserine modification is found at S1527. Positions 1544–1559 are enriched in low complexity; it reads SDSGTLLSTSSQASLA. Positions 1592–1861 are interaction with CTNNA1; it reads SATYLTSLDS…WLARERLRTS (270 aa). The segment covering 1603 to 1612 has biased composition (polar residues); it reads RLSPEVQSVA. Over residues 1624–1634 the composition is skewed to basic and acidic residues; sequence SELISEGRPVE. S1669 carries the post-translational modification Phosphoserine. Over residues 1671-1686 the composition is skewed to polar residues; sequence GSELSCTEGSLTSSLD. Position 1682 is a phosphothreonine (T1682). Phosphoserine is present on S1742. The tract at residues 1860-1958 is disordered; that stretch reads TSTSDLSRGE…GSKAEFHPCL (99 aa). Residues 1874–1909 show a composition bias toward polar residues; it reads QTENPSTREIATTDTPLSLHCNTGSSSSTLASTNRP. Phosphoserine is present on S1917. Polar residues predominate over residues 1918–1931; that stretch reads PDQINGESFQNVSK.

In terms of assembly, interacts with GTP-bound ARF1 and ARF6. Interacts with CTNNA1. In terms of processing, sumoylated with SUMO2 and SUMO3 in proliferating lymphocytes. In terms of tissue distribution, widely expressed with higher expression in brain, heart, skeletal muscle and placenta.

It localises to the golgi apparatus membrane. It is found in the cell junction. The protein localises to the cytoplasmic vesicle membrane. Its subcellular location is the cytoplasm. The protein resides in the cytoskeleton. In terms of biological role, functions as a GTPase-activating protein (GAP) for RHOA and CDC42. Downstream partner of ARF1 which may control Golgi apparatus structure and function. Also required for CTNNA1 recruitment to adherens junctions. The polypeptide is Rho GTPase-activating protein 21 (ARHGAP21) (Homo sapiens (Human)).